Consider the following 282-residue polypeptide: 2-dehydro-3-deoxyphosphooctonate aldolase (282 aa).

The protein belongs to the KdsA family.

The protein resides in the cytoplasm. It catalyses the reaction D-arabinose 5-phosphate + phosphoenolpyruvate + H2O = 3-deoxy-alpha-D-manno-2-octulosonate-8-phosphate + phosphate. Its pathway is carbohydrate biosynthesis; 3-deoxy-D-manno-octulosonate biosynthesis; 3-deoxy-D-manno-octulosonate from D-ribulose 5-phosphate: step 2/3. The protein operates within bacterial outer membrane biogenesis; lipopolysaccharide biosynthesis. This is 2-dehydro-3-deoxyphosphooctonate aldolase from Granulibacter bethesdensis (strain ATCC BAA-1260 / CGDNIH1).